A 159-amino-acid polypeptide reads, in one-letter code: Na(+)/H(+) antiporter subunit E1 (159 aa).

A run of 4 helical transmembrane segments spans residues 1–21 (MAVQLVLNFIIAVFWLFVTNS), 27–47 (FVLGFIFGLVLVYLLHRVLPG), 49–69 (FYVITLYRIIKLIIIFLIELI), and 101–121 (WQIVLLSNLITLTPGTVVLGV).

It belongs to the CPA3 antiporters (TC 2.A.63) subunit E family. As to quaternary structure, may form a heterooligomeric complex that consists of seven subunits: mnhA1, mnhB1, mnhC1, mnhD1, mnhE1, mnhF1 and mnhG1.

It localises to the cell membrane. Its function is as follows. Mnh complex is a Na(+)/H(+) antiporter involved in Na(+) excretion. The chain is Na(+)/H(+) antiporter subunit E1 (mnhE1) from Staphylococcus aureus (strain bovine RF122 / ET3-1).